The chain runs to 131 residues: Small ribosomal subunit protein uS8 (131 aa).

Belongs to the universal ribosomal protein uS8 family. Part of the 30S ribosomal subunit. Contacts proteins S5 and S12.

Functionally, one of the primary rRNA binding proteins, it binds directly to 16S rRNA central domain where it helps coordinate assembly of the platform of the 30S subunit. The chain is Small ribosomal subunit protein uS8 from Nautilia profundicola (strain ATCC BAA-1463 / DSM 18972 / AmH).